Here is a 354-residue protein sequence, read N- to C-terminus: Uroporphyrinogen decarboxylase (354 aa).

Residues 27–31, Asp-77, Tyr-154, Thr-209, and His-327 each bind substrate; that span reads RQAGR.

The protein belongs to the uroporphyrinogen decarboxylase family. Homodimer.

The protein resides in the cytoplasm. The enzyme catalyses uroporphyrinogen III + 4 H(+) = coproporphyrinogen III + 4 CO2. It functions in the pathway porphyrin-containing compound metabolism; protoporphyrin-IX biosynthesis; coproporphyrinogen-III from 5-aminolevulinate: step 4/4. Its function is as follows. Catalyzes the decarboxylation of four acetate groups of uroporphyrinogen-III to yield coproporphyrinogen-III. The protein is Uroporphyrinogen decarboxylase of Salmonella arizonae (strain ATCC BAA-731 / CDC346-86 / RSK2980).